The sequence spans 69 residues: DNA gyrase inhibitor YacG (69 aa).

Zn(2+) is bound by residues Cys7, Cys10, Cys26, and Cys30.

It belongs to the DNA gyrase inhibitor YacG family. As to quaternary structure, interacts with GyrB. The cofactor is Zn(2+).

Functionally, inhibits all the catalytic activities of DNA gyrase by preventing its interaction with DNA. Acts by binding directly to the C-terminal domain of GyrB, which probably disrupts DNA binding by the gyrase. The protein is DNA gyrase inhibitor YacG of Shewanella baltica (strain OS223).